A 1017-amino-acid chain; its full sequence is Protein translocase subunit SecA 1 (1017 aa).

ATP-binding positions include glutamine 143, 161–165 (GEGKT), and aspartate 661. Residues 978–999 (GLNDDDEPLPAQPITTEQKPGR) are disordered. 4 residues coordinate Zn(2+): cysteine 1003, cysteine 1005, cysteine 1014, and cysteine 1015.

Belongs to the SecA family. In terms of assembly, monomer and homodimer. Part of the essential Sec protein translocation apparatus which comprises SecA, SecYEG and auxiliary proteins SecDF. Other proteins may also be involved. The cofactor is Zn(2+).

It is found in the cell inner membrane. The protein localises to the cytoplasm. The enzyme catalyses ATP + H2O + cellular proteinSide 1 = ADP + phosphate + cellular proteinSide 2.. In terms of biological role, part of the Sec protein translocase complex. Interacts with the SecYEG preprotein conducting channel. Has a central role in coupling the hydrolysis of ATP to the transfer of proteins into and across the cell membrane, serving as an ATP-driven molecular motor driving the stepwise translocation of polypeptide chains across the membrane. The chain is Protein translocase subunit SecA 1 from Chlorobium chlorochromatii (strain CaD3).